We begin with the raw amino-acid sequence, 232 residues long: Very-long-chain (3R)-3-hydroxyacyl-CoA dehydratase 4 (232 aa).

Over 1–19 the chain is Cytoplasmic; the sequence is MGPSVLPAWLQPRYRKNVY. Residues 20–40 form a helical membrane-spanning segment; that stretch reads LFIYYLIQFCGHSWILANMTV. The Lumenal segment spans residues 41-56; that stretch reads RFFSFGKDSMADTFYA. Residues 57–77 traverse the membrane as a helical segment; it reads IGLVMRVCQSISLLELLHIYI. Residues 78-112 lie on the Cytoplasmic side of the membrane; that stretch reads GIESNQLFPRFLQLTERVIILFGVITSQEEVQEKC. The helical transmembrane segment at 113 to 133 threads the bilayer; the sequence is VVCVLFILWNLLDMVRYTYSM. The Lumenal segment spans residues 134-135; it reads LS. The chain crosses the membrane as a helical span at residues 136 to 156; it reads VIGTSYAALTWLSQTLWMPIY. Tyrosine 156 is a catalytic residue. Residue proline 157 is a topological domain, cytoplasmic. Residues 158–178 traverse the membrane as a helical segment; the sequence is LCVLAEAFTIYQSLPYFESFG. Residue glutamate 163 is part of the active site. Topologically, residues 179 to 189 are lumenal; the sequence is TNSTVLPFDLS. Residues 190-210 traverse the membrane as a helical segment; sequence TCFPYVLKLYLMMLFIGMYFT. Residues 211-232 are Cytoplasmic-facing; it reads YSHLYTERKDFLRVFSVKQKNV.

The protein belongs to the very long-chain fatty acids dehydratase HACD family. As to quaternary structure, may interact with enzymes of the ELO family (including ELOVL1); with those enzymes that mediate condensation, the first of the four steps of the reaction cycle responsible for fatty acids elongation, may be part of a larger fatty acids elongase complex.

It is found in the endoplasmic reticulum membrane. The enzyme catalyses a very-long-chain (3R)-3-hydroxyacyl-CoA = a very-long-chain (2E)-enoyl-CoA + H2O. It carries out the reaction (3R)-hydroxyhexadecanoyl-CoA = (2E)-hexadecenoyl-CoA + H2O. It functions in the pathway lipid metabolism; fatty acid biosynthesis. Catalyzes the third of the four reactions of the long-chain fatty acids elongation cycle. This endoplasmic reticulum-bound enzymatic process, allows the addition of two carbons to the chain of long- and very long-chain fatty acids/VLCFAs per cycle. This enzyme catalyzes the dehydration of the 3-hydroxyacyl-CoA intermediate into trans-2,3-enoyl-CoA, within each cycle of fatty acid elongation. Thereby, it participates in the production of VLCFAs of different chain lengths that are involved in multiple biological processes as precursors of membrane lipids and lipid mediators. The chain is Very-long-chain (3R)-3-hydroxyacyl-CoA dehydratase 4 from Mus musculus (Mouse).